We begin with the raw amino-acid sequence, 313 residues long: Ribosomal RNA small subunit methyltransferase H (313 aa).

S-adenosyl-L-methionine is bound by residues 35-37 (GGH), aspartate 55, phenylalanine 80, aspartate 102, and glutamine 109.

It belongs to the methyltransferase superfamily. RsmH family.

Its subcellular location is the cytoplasm. The enzyme catalyses cytidine(1402) in 16S rRNA + S-adenosyl-L-methionine = N(4)-methylcytidine(1402) in 16S rRNA + S-adenosyl-L-homocysteine + H(+). Specifically methylates the N4 position of cytidine in position 1402 (C1402) of 16S rRNA. This Shewanella violacea (strain JCM 10179 / CIP 106290 / LMG 19151 / DSS12) protein is Ribosomal RNA small subunit methyltransferase H.